The chain runs to 328 residues: Carbonic anhydrase-related protein 11 (328 aa).

Residues 1 to 23 form the signal peptide; it reads MGAAARLSAPRALVLWAALGAAA. Positions 33–303 constitute an Alpha-carbonic anhydrase domain; the sequence is DWWSYKDNLQ…LAHRALRGNR (271 aa). Residues Asn-118, Asn-170, and Asn-260 are each glycosylated (N-linked (GlcNAc...) asparagine). Residues 299–328 form a disordered region; that stretch reads LRGNRDPRHPERRCRGPNYRLHVDGAPHGR. Positions 319–328 are enriched in basic and acidic residues; it reads LHVDGAPHGR.

It belongs to the alpha-carbonic anhydrase family.

The protein localises to the secreted. Its function is as follows. Does not have a catalytic activity. The protein is Carbonic anhydrase-related protein 11 (CA11) of Pongo abelii (Sumatran orangutan).